The primary structure comprises 241 residues: MFLNSLLTNFAALEVGQHLYWQIGNIRLHGQVFLTSWILLGALLVFISLGTKKMENDPKGLQNLLEFLWDYIRDLARTQIGEKVYRDWMPFIGTLFLFVFVSNWGGALIPWRLIKLPSGELGAPTADINTTIALALLVSLSYFYAGLSNKGWRYFEYYVHPTPIMLPFKILEDFTKPLSLSFRLFGNILADELVVGVLVFLVPLILPIPVMFLGLFTSAIQALIFATLAAYYIGEAVEEHH.

5 consecutive transmembrane segments (helical) span residues 30-50 (GQVF…ISLG), 91-111 (FIGT…LIPW), 128-148 (INTT…AGLS), 193-213 (LVVG…VMFL), and 214-234 (GLFT…YYIG).

Belongs to the ATPase A chain family. In terms of assembly, F-type ATPases have 2 components, CF(1) - the catalytic core - and CF(0) - the membrane proton channel. CF(1) has five subunits: alpha(3), beta(3), gamma(1), delta(1), epsilon(1). CF(0) has four main subunits: a, b, b' and c.

Its subcellular location is the cellular thylakoid membrane. Its function is as follows. Key component of the proton channel; it plays a direct role in the translocation of protons across the membrane. In Prochlorococcus marinus (strain MIT 9215), this protein is ATP synthase subunit a.